The chain runs to 264 residues: Tryptophan synthase alpha chain (264 aa).

Active-site proton acceptor residues include Glu-49 and Asp-60.

The protein belongs to the TrpA family. As to quaternary structure, tetramer of two alpha and two beta chains.

The catalysed reaction is (1S,2R)-1-C-(indol-3-yl)glycerol 3-phosphate + L-serine = D-glyceraldehyde 3-phosphate + L-tryptophan + H2O. The protein operates within amino-acid biosynthesis; L-tryptophan biosynthesis; L-tryptophan from chorismate: step 5/5. Its function is as follows. The alpha subunit is responsible for the aldol cleavage of indoleglycerol phosphate to indole and glyceraldehyde 3-phosphate. This is Tryptophan synthase alpha chain from Microcystis aeruginosa (strain NIES-843 / IAM M-2473).